A 1841-amino-acid chain; its full sequence is Sucrase-isomaltase, intestinal (1841 aa).

Residues 1–12 (MAKKKFSALEIS) lie on the Cytoplasmic side of the membrane. Residue serine 7 is modified to Phosphoserine; by PKA. Residues 13–32 (LIVLFIIVTAIAIALVTVLA) traverse the membrane as a helical; Signal-anchor for type II membrane protein segment. The Lumenal portion of the chain corresponds to 33 to 1841 (TKVPAVEEIK…LDEPIQITWS (1809 aa)). The tract at residues 42-81 (KSPTPTSNSTPTSTPTSTSTPTSTSTPSPGKCPPEQGEPI) is disordered. The segment covering 43–70 (SPTPTSNSTPTSTPTSTSTPTSTSTPSP) has biased composition (low complexity). In terms of domain architecture, P-type 1 spans 71-120 (GKCPPEQGEPINERINCIPEQHPTKAICEERGCCWRPWNNTVIPWCFFAD). 3 cysteine pairs are disulfide-bonded: cysteine 73/cysteine 104, cysteine 87/cysteine 103, and cysteine 98/cysteine 116. Asparagine 109 carries an N-linked (GlcNAc...) asparagine glycan. The tract at residues 120-1013 (DNHGYNAESI…ELQLNPPNAR (894 aa)) is isomaltase. Positions 274 and 398 each coordinate substrate. Sulfotyrosine is present on residues tyrosine 401 and tyrosine 410. Asparagine 464 is a glycosylation site (N-linked (GlcNAc...) asparagine). Residue aspartate 514 is the Nucleophile; for isomaltase activity of the active site. Arginine 599 contributes to the substrate binding site. The For isomaltase activity role is filled by aspartate 615. Cysteine 646 and cysteine 657 are joined by a disulfide. Histidine 673 contacts substrate. N-linked (GlcNAc...) asparagine glycans are attached at residues asparagine 758, asparagine 765, asparagine 867, and asparagine 910. The 49-residue stretch at 936–984 (RWCRTFSDNEKFTCYPDVGTATEGTCTQRGCLWQPVSGLSNVPPYYFPP) folds into the P-type 2 domain. The segment at 1014-1841 (IKLPSNPIST…LDEPIQITWS (828 aa)) is sucrase. Residues asparagine 1240, asparagine 1308, asparagine 1345, asparagine 1359, and asparagine 1373 are each glycosylated (N-linked (GlcNAc...) asparagine). Sulfotyrosine is present on tyrosine 1387. The Nucleophile; for sucrase activity role is filled by aspartate 1399. The For sucrase activity role is filled by glutamate 1402. Residue asparagine 1485 is glycosylated (N-linked (GlcNAc...) asparagine). Residue aspartate 1512 is the Proton donor; for sucrase activity of the active site. N-linked (GlcNAc...) asparagine glycans are attached at residues asparagine 1513, asparagine 1575, asparagine 1762, and asparagine 1829.

It belongs to the glycosyl hydrolase 31 family. The resulting sucrase and isomaltase subunits stay associated with one another in a complex by non-covalent linkages. In terms of processing, the precursor is proteolytically cleaved when exposed to pancreatic proteases in the intestinal lumen. Sulfated.

It is found in the apical cell membrane. It carries out the reaction Hydrolysis of sucrose and maltose by an alpha-D-glucosidase-type action.. It catalyses the reaction Hydrolysis of (1-&gt;6)-alpha-D-glucosidic linkages in some oligosaccharides produced from starch and glycogen by alpha-amylase, and in isomaltose.. Plays an important role in the final stage of carbohydrate digestion. Isomaltase activity is specific for both alpha-1,4- and alpha-1,6-oligosaccharides. In Rattus norvegicus (Rat), this protein is Sucrase-isomaltase, intestinal (Si).